A 108-amino-acid polypeptide reads, in one-letter code: MTLGQQAESLAQSYLEQQGLSFVERNVRYPFGEIDLVMRHKKYWVFVEVKYRSANQFGGAIQALSKAQIGRIRMAASHYLQSHKLDVPCRFDVVAIEDTQIQWLVDAF.

It belongs to the UPF0102 family.

This Shewanella oneidensis (strain ATCC 700550 / JCM 31522 / CIP 106686 / LMG 19005 / NCIMB 14063 / MR-1) protein is UPF0102 protein SO_0299.